The primary structure comprises 735 residues: Nuclear intron maturase 2, mitochondrial (735 aa).

A mitochondrion-targeting transit peptide spans 1–12 (MRRSFSVLGPYK). Residues 161 to 460 (RDKTDYESLS…KGIMFLDHVL (300 aa)) enclose the Reverse transcriptase domain. Positions 485–653 (GTLLSVTASL…KFLIEYLTLD (169 aa)) are intron maturase type-2. The segment at 707–735 (SSTYNRDNDDQKNKEEDEDSEDGLRIARM) is disordered. Residues 712–721 (RDNDDQKNKE) are compositionally biased toward basic and acidic residues.

The protein belongs to the plant nuclear intron maturase (nMat) family. Associated to a large ribonucleoprotein complex in mitochondria containing group-II intron RNAs.

It is found in the mitochondrion. Its function is as follows. Nuclear-encoded maturase required for splicing of group-II introns in mitochondria. Involved in the splicing of mitochondrial COX2, NAD1 and NAD7 transcripts. Necessary for mitochondrial biogenesis during early developmental stages. This is Nuclear intron maturase 2, mitochondrial from Arabidopsis thaliana (Mouse-ear cress).